The sequence spans 501 residues: Beta-glucosidase 25 (501 aa).

A signal peptide spans 1–19 (MSLLTLVHILVSFSACVEA). A beta-D-glucoside is bound at residue Q39. A glycan (N-linked (GlcNAc...) asparagine) is linked at N107. Residues H140 and 185 to 186 (NE) each bind a beta-D-glucoside. The active-site Proton donor is E186. An intrachain disulfide couples C205 to C213. A beta-D-glucoside is bound by residues Y329, E402, W452, 459-460 (EW), and F468. E402 (nucleophile) is an active-site residue. Residue N478 is glycosylated (N-linked (GlcNAc...) asparagine).

This sequence belongs to the glycosyl hydrolase 1 family.

It catalyses the reaction Hydrolysis of terminal, non-reducing beta-D-glucosyl residues with release of beta-D-glucose.. This is Beta-glucosidase 25 (BGLU25) from Oryza sativa subsp. japonica (Rice).